Reading from the N-terminus, the 500-residue chain is Intracellular exo-alpha-(1-&gt;5)-L-arabinofuranosidase (500 aa).

Residues Glu-28, Asn-73, and Asn-173 each coordinate alpha-L-arabinofuranose. Residue Glu-174 is the Proton donor/acceptor of the active site. 3 residues coordinate alpha-L-arabinofuranose: Tyr-245, Glu-293, and Gln-350. Glu-293 serves as the catalytic Nucleophile.

This sequence belongs to the glycosyl hydrolase 51 family. In terms of assembly, homohexamer; trimer of dimers.

Its subcellular location is the cytoplasm. The catalysed reaction is Hydrolysis of terminal non-reducing alpha-L-arabinofuranoside residues in alpha-L-arabinosides.. It functions in the pathway glycan metabolism; L-arabinan degradation. In terms of biological role, involved in the degradation of arabinan and is a key enzyme in the complete degradation of the plant cell wall. Catalyzes the cleavage of terminal alpha-(1-&gt;5)-arabinofuranosyl bonds in different hemicellulosic homopolysaccharides (branched and debranched arabinans). In Halalkalibacterium halodurans (strain ATCC BAA-125 / DSM 18197 / FERM 7344 / JCM 9153 / C-125) (Bacillus halodurans), this protein is Intracellular exo-alpha-(1-&gt;5)-L-arabinofuranosidase (abfA).